We begin with the raw amino-acid sequence, 551 residues long: Cytochrome c oxidase subunit 1 (551 aa).

The chain crosses the membrane as a helical span at residues 29–49; the sequence is VIGIQYLVTSFLFFFIGGSFA. His76 contributes to the Fe(II)-heme a binding site. 11 helical membrane-spanning segments follow: residues 79-99, 113-133, 156-176, 205-225, 245-265, 283-303, 313-333, 348-368, 382-402, 424-444, and 466-486; these read IMIFLWIVPAGAAFANYLIPL, AVAFWLTPPGGILLISSFFVG, LWILSLLLVGTSSILGAINFV, LILLSTPVLASALILLSFDLI, LFWFYSHPAVYIMILPFFGVI, IAYSSLAISFLGLIVWAHHMF, MFFMATTMLIAVPTGIKIFSW, MLFAFGFLSSFMIGGLTGVMV, FVVGHFHYVLFGGSAFALFSG, FILTFIGMNLTFMPMHELGLM, and IGAYVLAASTIPFVINVFWSL. Positions 251, 255, 300, and 301 each coordinate Cu cation. The segment at residues 251 to 255 is a cross-link (1'-histidyl-3'-tyrosine (His-Tyr)); the sequence is HPAVY. Position 386 (His386) interacts with heme a3. His388 serves as a coordination point for Fe(II)-heme a.

It belongs to the heme-copper respiratory oxidase family. Cu(2+) is required as a cofactor. Requires heme as cofactor.

The protein resides in the cell membrane. It catalyses the reaction 4 Fe(II)-[cytochrome c] + O2 + 8 H(+)(in) = 4 Fe(III)-[cytochrome c] + 2 H2O + 4 H(+)(out). It participates in energy metabolism; oxidative phosphorylation. Cytochrome c oxidase is the component of the respiratory chain that catalyzes the reduction of oxygen to water. Subunits 1-3 form the functional core of the enzyme complex. CO I is the catalytic subunit of the enzyme. Electrons originating in cytochrome c are transferred via the copper A center of subunit 2 and heme A of subunit 1 to the bimetallic center formed by heme A3 and copper B. This is Cytochrome c oxidase subunit 1 (ctaD) from Synechocystis sp. (strain ATCC 27184 / PCC 6803 / Kazusa).